The chain runs to 149 residues: Nucleoside diphosphate kinase (149 aa).

Lys-9, Phe-57, Arg-85, Thr-91, Arg-102, and Asn-112 together coordinate ATP. The active-site Pros-phosphohistidine intermediate is His-115.

It belongs to the NDK family. As to quaternary structure, homotetramer. Mg(2+) is required as a cofactor.

It is found in the cytoplasm. The catalysed reaction is a 2'-deoxyribonucleoside 5'-diphosphate + ATP = a 2'-deoxyribonucleoside 5'-triphosphate + ADP. It carries out the reaction a ribonucleoside 5'-diphosphate + ATP = a ribonucleoside 5'-triphosphate + ADP. Functionally, major role in the synthesis of nucleoside triphosphates other than ATP. The ATP gamma phosphate is transferred to the NDP beta phosphate via a ping-pong mechanism, using a phosphorylated active-site intermediate. The sequence is that of Nucleoside diphosphate kinase from Desulfitobacterium hafniense (strain Y51).